A 564-amino-acid chain; its full sequence is MSNPVRSKGGCWTCRLRRKKCDEGKPECTTCQALSITCYGYGPKPEWMDNGDAEKDVANSLKHIVRYTSRRTSSRYRVPPGQKANPKLAPKVHAAASTPSTNTSHSTETTPPSDNGFYDTAESPLSPNGAQHLTIATIPAEDSILLMHFLDKVFPLQYPMYRPDILEGGRGWLLALLLQTKSLYHAALALSSYHRRMLVFERISEQCRATAAVQQEKHLETCLNEVRQAMVILDQRTRQRKSYDGMGTVTSIVQLVFFELFAGQDHAWRTHLNAAIDVYDQNCRDKLEHLDLSEASKTILRNDQRLAVDGALVTQEVTTFRFMGGSIIWLDILSSLAAGSVPRLLSYHQGVLDAASQVKLENIMGCKNWLMCQIGRIAALQGHRRQDGWTSQRHGIKLHSIAADIKSEIESGMAREALESLNIQTSDSCGINNSSTNSVTLTTRMFAFMAIIHLHLVTHDFERLDNLRETIADAIRLLQSQVPCSMIPVIVAPLFIIGCVAAQGDEQSLFRASLASDTSQHRLYRHRKDVLSALEEIWSKRQTSTDYTWNDVLDMGQHKYLLFL.

Residues 11–38 (CWTCRLRRKKCDEGKPECTTCQALSITC) constitute a DNA-binding region (zn(2)-C6 fungal-type). The segment at 71–123 (RTSSRYRVPPGQKANPKLAPKVHAAASTPSTNTSHSTETTPPSDNGFYDTAES) is disordered. Positions 97–113 (STPSTNTSHSTETTPPS) are enriched in polar residues.

The protein resides in the nucleus. Functionally, transcription factor that, with ptaR1 and ptaR2, coregulates the expression of the gene cluster that mediates the biosynthesis of pestheic acid, a diphenyl ether which is a biosynthetic precursor of the unique chloropupukeananes. This Pestalotiopsis fici (strain W106-1 / CGMCC3.15140) protein is Pestheic acid cluster transcriptional regulator 3.